Reading from the N-terminus, the 176-residue chain is Large ribosomal subunit protein uL10 (176 aa).

Belongs to the universal ribosomal protein uL10 family. As to quaternary structure, part of the ribosomal stalk of the 50S ribosomal subunit. The N-terminus interacts with L11 and the large rRNA to form the base of the stalk. The C-terminus forms an elongated spine to which L12 dimers bind in a sequential fashion forming a multimeric L10(L12)X complex.

In terms of biological role, forms part of the ribosomal stalk, playing a central role in the interaction of the ribosome with GTP-bound translation factors. This is Large ribosomal subunit protein uL10 from Carboxydothermus hydrogenoformans (strain ATCC BAA-161 / DSM 6008 / Z-2901).